The following is a 398-amino-acid chain: Secreted aspartic protease 2 (398 aa).

Positions 1-18 (MFLKNIFIALAIALLVDA) are cleaved as a signal peptide. A propeptide spans 19 to 56 (TPTTTKRSAGFVALDFSVVKTPKAFPVTNGQEGKTSKR) (activation peptide). The Peptidase A1 domain occupies 70-384 (YAADITVGSN…DLDDNEISLA (315 aa)). Asp88 is an active-site residue. Residue 88–90 (DTG) coordinates pepstatin A. Cysteines 103 and 115 form a disulfide. 141–142 (GD) provides a ligand contact to pepstatin A. Zn(2+) contacts are provided by Asp247 and Asp270. Residue Asp274 is part of the active site. 274 to 278 (DSGTT) contributes to the pepstatin A binding site. The cysteines at positions 312 and 350 are disulfide-linked. N-linked (GlcNAc...) asparagine glycosylation is found at Asn313 and Asn321.

This sequence belongs to the peptidase A1 family. In terms of assembly, monomer.

Its subcellular location is the secreted. The enzyme catalyses Preferential cleavage at the carboxyl of hydrophobic amino acids, but fails to cleave 15-Leu-|-Tyr-16, 16-Tyr-|-Leu-17 and 24-Phe-|-Phe-25 of insulin B chain. Activates trypsinogen, and degrades keratin.. In terms of biological role, secreted aspartic peptidases (SAPs) are a group of ten acidic hydrolases considered as key virulence factors. These enzymes supply the fungus with nutrient amino acids as well as are able to degrade the selected host's proteins involved in the immune defense. Induces host inflammatory cytokine production in a proteolytic activity-independent way. Plays a role in tissue damage during superficial infection. Moreover, acts toward human hemoglobin though limited proteolysis to generate a variety of antimicrobial hemocidins, enabling to compete with the other microorganisms of the same physiological niche using the microbicidal peptides generated from the host protein. Functionally, plays a key role in defense against host by cleaving histatin-5 (Hst 5), a peptide from human saliva that carries out fungicidal activity. The cleavage rate decreases in an order of SAP2 &gt; SAP9 &gt; SAP3 &gt; SAP7 &gt; SAP4 &gt; SAP1 &gt; SAP8. The first cleavage occurs between residues 'Lys-17' and 'His-18' of Hst 5, giving DSHAKRHHGYKRKFHEK and HHSHRGY peptides. Simultaneously, the DSHAKRHHGYKRK peptide is also formed. Further fragmentation by SAP2 results in FHEK and DSHAKRHHGY products. In Candida albicans (Yeast), this protein is Secreted aspartic protease 2.